A 27-amino-acid polypeptide reads, in one-letter code: Protamine-A (27 aa).

Residues 1 to 27 (ARRRRRHASTKLKRRRRRRRHGKKSHK) are disordered.

As to expression, testis.

The protein localises to the nucleus. It localises to the chromosome. Protamines substitute for histones in the chromatin of sperm during the haploid phase of spermatogenesis. They compact sperm DNA into a highly condensed, stable and inactive complex. The sequence is that of Protamine-A from Acipenser stellatus (Sevruga).